The chain runs to 437 residues: Arginine biosynthesis bifunctional protein ArgJ, mitochondrial (437 aa).

Positions 173, 200, 211, 297, 432, and 437 each coordinate substrate. T211 acts as the Nucleophile in catalysis.

The protein belongs to the ArgJ family. In terms of assembly, heterodimer of an alpha and a beta chain. In terms of processing, the alpha and beta chains are autoproteolytically processed from a single precursor protein within the mitochondrion.

The protein resides in the mitochondrion matrix. It catalyses the reaction N(2)-acetyl-L-ornithine + L-glutamate = N-acetyl-L-glutamate + L-ornithine. The enzyme catalyses L-glutamate + acetyl-CoA = N-acetyl-L-glutamate + CoA + H(+). It functions in the pathway amino-acid biosynthesis; L-arginine biosynthesis; L-ornithine and N-acetyl-L-glutamate from L-glutamate and N(2)-acetyl-L-ornithine (cyclic): step 1/1. Its pathway is amino-acid biosynthesis; L-arginine biosynthesis; N(2)-acetyl-L-ornithine from L-glutamate: step 1/4. Functionally, catalyzes two activities which are involved in the cyclic version of arginine biosynthesis: the synthesis of acetylglutamate from glutamate and acetyl-CoA, and of ornithine by transacetylation between acetylornithine and glutamate. The chain is Arginine biosynthesis bifunctional protein ArgJ, mitochondrial from Zygosaccharomyces rouxii (strain ATCC 2623 / CBS 732 / NBRC 1130 / NCYC 568 / NRRL Y-229).